A 223-amino-acid polypeptide reads, in one-letter code: Holliday junction branch migration complex subunit RuvA (223 aa).

Residues 1 to 64 (MIGRIAGVIL…EDLLQLFGFP (64 aa)) are domain I. The tract at residues 65-143 (TLLEKEWHRL…AVMALGGALT (79 aa)) is domain II. A flexible linker region spans residues 144-169 (VDPGPLPEVELVEAAVPAPVPAKAAP). Residues 170-223 (SSAQATADALSALGNLGYAPSEAASAVAEAAAREPAAPTAALIRAALRLLAPKE) are domain III.

This sequence belongs to the RuvA family. Homotetramer. Forms an RuvA(8)-RuvB(12)-Holliday junction (HJ) complex. HJ DNA is sandwiched between 2 RuvA tetramers; dsDNA enters through RuvA and exits via RuvB. An RuvB hexamer assembles on each DNA strand where it exits the tetramer. Each RuvB hexamer is contacted by two RuvA subunits (via domain III) on 2 adjacent RuvB subunits; this complex drives branch migration. In the full resolvosome a probable DNA-RuvA(4)-RuvB(12)-RuvC(2) complex forms which resolves the HJ.

The protein resides in the cytoplasm. The RuvA-RuvB-RuvC complex processes Holliday junction (HJ) DNA during genetic recombination and DNA repair, while the RuvA-RuvB complex plays an important role in the rescue of blocked DNA replication forks via replication fork reversal (RFR). RuvA specifically binds to HJ cruciform DNA, conferring on it an open structure. The RuvB hexamer acts as an ATP-dependent pump, pulling dsDNA into and through the RuvAB complex. HJ branch migration allows RuvC to scan DNA until it finds its consensus sequence, where it cleaves and resolves the cruciform DNA. In Paracoccus denitrificans (strain Pd 1222), this protein is Holliday junction branch migration complex subunit RuvA.